The chain runs to 784 residues: Lon protease (784 aa).

The Lon N-terminal domain maps to 11 to 204; it reads IPVLPLRDVV…YLMAMMESEI (194 aa). An ATP-binding site is contributed by 356-363; sequence GPPGVGKT. The 182-residue stretch at 592-773 folds into the Lon proteolytic domain; the sequence is ENRVGQVTGL…EEVLALALQN (182 aa). Residues Ser679 and Lys722 contribute to the active site.

The protein belongs to the peptidase S16 family. As to quaternary structure, homohexamer. Organized in a ring with a central cavity.

Its subcellular location is the cytoplasm. The enzyme catalyses Hydrolysis of proteins in presence of ATP.. Functionally, ATP-dependent serine protease that mediates the selective degradation of mutant and abnormal proteins as well as certain short-lived regulatory proteins. Required for cellular homeostasis and for survival from DNA damage and developmental changes induced by stress. Degrades polypeptides processively to yield small peptide fragments that are 5 to 10 amino acids long. Binds to DNA in a double-stranded, site-specific manner. The protein is Lon protease of Erwinia amylovora (Fire blight bacteria).